Consider the following 242-residue polypeptide: Type III pantothenate kinase (242 aa).

Aspartate 6–lysine 13 serves as a coordination point for ATP. Residues tyrosine 90 and glycine 97 to arginine 100 each bind substrate. The Proton acceptor role is filled by aspartate 99. Residue aspartate 119 coordinates K(+). Residue serine 122 participates in ATP binding. A substrate-binding site is contributed by threonine 174.

Belongs to the type III pantothenate kinase family. As to quaternary structure, homodimer. NH4(+) is required as a cofactor. It depends on K(+) as a cofactor.

It localises to the cytoplasm. It catalyses the reaction (R)-pantothenate + ATP = (R)-4'-phosphopantothenate + ADP + H(+). The protein operates within cofactor biosynthesis; coenzyme A biosynthesis; CoA from (R)-pantothenate: step 1/5. Its function is as follows. Catalyzes the phosphorylation of pantothenate (Pan), the first step in CoA biosynthesis. This Marinobacter nauticus (strain ATCC 700491 / DSM 11845 / VT8) (Marinobacter aquaeolei) protein is Type III pantothenate kinase.